Consider the following 510-residue polypeptide: ATP synthase subunit alpha (510 aa).

171–178 (GDRQTGKT) contacts ATP.

Belongs to the ATPase alpha/beta chains family. As to quaternary structure, F-type ATPases have 2 components, CF(1) - the catalytic core - and CF(0) - the membrane proton channel. CF(1) has five subunits: alpha(3), beta(3), gamma(1), delta(1), epsilon(1). CF(0) has three main subunits: a(1), b(2) and c(9-12). The alpha and beta chains form an alternating ring which encloses part of the gamma chain. CF(1) is attached to CF(0) by a central stalk formed by the gamma and epsilon chains, while a peripheral stalk is formed by the delta and b chains.

It is found in the cell inner membrane. It catalyses the reaction ATP + H2O + 4 H(+)(in) = ADP + phosphate + 5 H(+)(out). Produces ATP from ADP in the presence of a proton gradient across the membrane. The alpha chain is a regulatory subunit. The chain is ATP synthase subunit alpha from Phenylobacterium zucineum (strain HLK1).